The sequence spans 199 residues: GTP cyclohydrolase-2 (199 aa).

A GTP-binding site is contributed by 49–53 (RVHSE). Residues Cys-54, Cys-65, and Cys-67 each coordinate Zn(2+). GTP contacts are provided by residues Gln-70, 92 to 94 (EGR), and Thr-114. The active-site Proton acceptor is the Asp-126. Residue Arg-128 is the Nucleophile of the active site. GTP-binding residues include Thr-149 and Lys-154.

It belongs to the GTP cyclohydrolase II family. Zn(2+) serves as cofactor.

It carries out the reaction GTP + 4 H2O = 2,5-diamino-6-hydroxy-4-(5-phosphoribosylamino)-pyrimidine + formate + 2 phosphate + 3 H(+). Its pathway is cofactor biosynthesis; riboflavin biosynthesis; 5-amino-6-(D-ribitylamino)uracil from GTP: step 1/4. In terms of biological role, catalyzes the conversion of GTP to 2,5-diamino-6-ribosylamino-4(3H)-pyrimidinone 5'-phosphate (DARP), formate and pyrophosphate. The polypeptide is GTP cyclohydrolase-2 (Baumannia cicadellinicola subsp. Homalodisca coagulata).